We begin with the raw amino-acid sequence, 667 residues long: Protein OS-9 (667 aa).

The first 25 residues, 1-25, serve as a signal peptide directing secretion; that stretch reads MAAETLLSSLLGLLLLGLLLPATLT. One can recognise an MRH domain in the interval 108–230; that stretch reads APCLLKTKDW…TIRTPRLCPH (123 aa). A disulfide bridge connects residues C110 and C123. Residues W117, W118, and Q130 each contribute to the a mannooligosaccharide derivative site. An N-linked (GlcNAc...) asparagine glycan is attached at N177. 2 disulfides stabilise this stretch: C181–C216 and C196–C228. Residues D182, R188, E212, and Y218 each contribute to the a mannooligosaccharide derivative site. Disordered stretches follow at residues 262-450, 506-541, and 636-667; these read QADS…SDRE, EKQS…EHRV, and ERQR…EFDF. Basic and acidic residues-rich tracts occupy residues 263-279, 304-328, and 396-408; these read ADSK…RQDP, ENSK…KEET, and PSRE…KGDP. Residues 410–429 show a composition bias toward acidic residues; the sequence is QQNEVEEEEDDEDEDEDEDE. Residues 430 to 450 show a composition bias toward basic and acidic residues; that stretch reads RQLLGEFEKELEGILLPSDRE. Basic residues predominate over residues 514–523; it reads KKHRKRRVVP. Residues 636–647 show a composition bias toward basic and acidic residues; that stretch reads ERQRQKELESNY.

This sequence belongs to the OS-9 family. As to quaternary structure, component of the HRD1 complex, which comprises at least SYNV1/HRD1, DERL1/2, FAM8A1, HERPUD1/HERP, OS9, SEL1L and UBE2J1. FAM8A1 is stabilized by interaction with SYNV1, which prevents its proteasomal degradation. OS9 and UBE2J1 recruitment to the complex may be mediated by SEL1L. Through this complex, may interact with ERLEC1 and HSPA5. Interacts (via C-terminus) with CPNE6 (via second C2 domain); this interaction occurs in a calcium-dependent manner in vitro. Interacts with CREB3. Intramolecular disulfide bonds.

It is found in the endoplasmic reticulum lumen. Functionally, lectin component of the HRD1 complex, which functions in endoplasmic reticulum (ER) quality control and ER-associated degradation (ERAD). Specifically recognizes and binds improperly folded glycoproteins as well as hyperglycosylated proteins, retain them in the ER, and transfers them to the ubiquitination machinery and promote their degradation. Possible targets include TRPV4 as well as hyperglycosylated HSP90B1. This Bos taurus (Bovine) protein is Protein OS-9 (OS9).